The primary structure comprises 84 residues: DNA-directed RNA polymerase subunit Rpo5 (84 aa).

This sequence belongs to the archaeal Rpo5/eukaryotic RPB5 RNA polymerase subunit family. In terms of assembly, part of the RNA polymerase complex.

Its subcellular location is the cytoplasm. The enzyme catalyses RNA(n) + a ribonucleoside 5'-triphosphate = RNA(n+1) + diphosphate. Functionally, DNA-dependent RNA polymerase (RNAP) catalyzes the transcription of DNA into RNA using the four ribonucleoside triphosphates as substrates. This Sulfurisphaera tokodaii (strain DSM 16993 / JCM 10545 / NBRC 100140 / 7) (Sulfolobus tokodaii) protein is DNA-directed RNA polymerase subunit Rpo5.